The primary structure comprises 641 residues: 1-deoxy-D-xylulose-5-phosphate synthase (641 aa).

Thiamine diphosphate is bound by residues His79 and 120–122 (GHS). Residue Asp151 participates in Mg(2+) binding. Thiamine diphosphate contacts are provided by residues 152-153 (GS), Asn180, Tyr290, and Glu372. Asn180 is a binding site for Mg(2+).

This sequence belongs to the transketolase family. DXPS subfamily. As to quaternary structure, homodimer. It depends on Mg(2+) as a cofactor. Thiamine diphosphate serves as cofactor.

It catalyses the reaction D-glyceraldehyde 3-phosphate + pyruvate + H(+) = 1-deoxy-D-xylulose 5-phosphate + CO2. The protein operates within metabolic intermediate biosynthesis; 1-deoxy-D-xylulose 5-phosphate biosynthesis; 1-deoxy-D-xylulose 5-phosphate from D-glyceraldehyde 3-phosphate and pyruvate: step 1/1. Catalyzes the acyloin condensation reaction between C atoms 2 and 3 of pyruvate and glyceraldehyde 3-phosphate to yield 1-deoxy-D-xylulose-5-phosphate (DXP). In Rhodopseudomonas palustris (strain TIE-1), this protein is 1-deoxy-D-xylulose-5-phosphate synthase.